We begin with the raw amino-acid sequence, 592 residues long: Sodium- and chloride-dependent transporter XTRP3A (592 aa).

At 1 to 7 the chain is on the cytoplasmic side; that stretch reads MEKARPQ. The helical transmembrane segment at 8-28 threads the bilayer; sequence WGHPLQFVFACISYAVGLGNV. The Extracellular segment spans residues 29-42; it reads WRFPYLCQMYGGGS. The chain crosses the membrane as a helical span at residues 43–63; sequence FLVPYIIMLIVEGMPLLYLEL. Residues 64-79 are Cytoplasmic-facing; it reads AVGQRMRQGSIGAWRT. A helical transmembrane segment spans residues 80–100; that stretch reads ISPYLSGVGVASVVVSFFLSM. Over 101–165 the chain is Extracellular; sequence YYNVINAWGF…ISPSIQENGG (65 aa). An N-linked (GlcNAc...) asparagine glycan is attached at asparagine 131. The chain crosses the membrane as a helical span at residues 166-186; it reads VQWEPALCLTLAWLMVYLCIL. Topologically, residues 187 to 194 are cytoplasmic; it reads RGTESTGK. Residues 195 to 215 form a helical membrane-spanning segment; sequence VVYFTASMPYCVLIIYLVRGL. The Extracellular segment spans residues 216 to 241; it reads TLHGATNGLMYMFTPKMEQLANPKAW. The chain crosses the membrane as a helical span at residues 242–262; sequence INAATQIFFSLGLGFGSLIAF. At 263 to 276 the chain is on the cytoplasmic side; it reads ASYNEPSNNCQKHA. The chain crosses the membrane as a helical span at residues 277–297; it reads IIVSIINSSTSIFASIVTFSI. At 298-389 the chain is on the extracellular side; it reads YGFKATFNYE…EAIKNMEVSQ (92 aa). Residues 390 to 410 traverse the membrane as a helical segment; sequence LWSVLYFFMLLMLGIGSMLGN. At 411–431 the chain is on the cytoplasmic side; the sequence is TAAILTPLTDSKVISSYLPKE. Residues 432–452 form a helical membrane-spanning segment; the sequence is AISGLVCLINCAVGMVFTMEA. Residues 453–465 lie on the Extracellular side of the membrane; the sequence is GNYWFDIFNDYAA. The helical transmembrane segment at 466–486 threads the bilayer; the sequence is TLSLLLIVLVETIAVCYVYGL. Over 487-504 the chain is Cytoplasmic; that stretch reads KRFESDLRAMTGRTLSWY. Residues 505–525 traverse the membrane as a helical segment; that stretch reads WKVMWAFVSPLLIVGLFIFYL. The Extracellular segment spans residues 526-554; the sequence is SDYILTGTLQYQAWDATQGQLVTKDYPPH. The helical transmembrane segment at 555–575 threads the bilayer; sequence ALAVIGLLVASSTMCIPLVAL. At 576–592 the chain is on the cytoplasmic side; it reads GTFIRNRLKRGGSAPVA.

It belongs to the sodium:neurotransmitter symporter (SNF) (TC 2.A.22) family. SLC6A20 subfamily. Expressed in brain, kidney, small intestine, thymus, spleen and lung. In the brain, expressed in cerebellum, cortex and brain stem. Not detected in liver, muscle or heart. In brain, widespread in various regions, including the meninges, choroid plexus, cortex, hippocampus and thalamus.

It localises to the apical cell membrane. It catalyses the reaction L-proline(out) + chloride(out) + 2 Na(+)(out) = L-proline(in) + chloride(in) + 2 Na(+)(in). It carries out the reaction 4-hydroxy-L-proline(out) + chloride(out) + 2 Na(+)(out) = 4-hydroxy-L-proline(in) + chloride(in) + 2 Na(+)(in). The enzyme catalyses 2-methyl-2-(methylamino)propanoate(out) + chloride(out) + 2 Na(+)(out) = 2-methyl-2-(methylamino)propanoate(in) + chloride(in) + 2 Na(+)(in). The catalysed reaction is L-pipecolate(out) + chloride(out) + 2 Na(+)(out) = L-pipecolate(in) + chloride(in) + 2 Na(+)(in). It catalyses the reaction glycine betaine(out) + chloride(out) + 2 Na(+)(out) = glycine betaine(in) + chloride(in) + 2 Na(+)(in). It carries out the reaction glycine(out) + chloride(out) + 2 Na(+)(out) = glycine(in) + chloride(in) + 2 Na(+)(in). In terms of biological role, mediates the Na(+)- and Cl(-)-dependent uptake of imino acids such as L-proline, N-methyl-L-proline and pipecolate as well as N-methylated amino acids. Also transports glycine, regulates proline and glycine homeostasis in the brain playing a role in the modulation of NMDAR currents. The protein is Sodium- and chloride-dependent transporter XTRP3A of Mus musculus (Mouse).